The sequence spans 688 residues: MAKNFLIELGTEELPPTALRSLAEAFASNFEAELKAADLAHQGVKWYATPRRLALKVAELAESQADKVVEKRGPAVSAAFDADGNPTKAAQGWARGNGITVEQAERLKTDKGEWLLHKEEVKGKPVQELVVDFAAKALAGLPIPKAMRWGNSDIQFIRPVKTLTILLGDELIEGSILGVSSARTLRGHRFMGESEFTIDSADQYPAILEERGKVMADYDARKAIILADSEKAAAAVGGKADLEDDLVEEVTSLVEWPVVLTAKFEEEFLKVPSEALVYTMKGDQKYFPVYDENKKLLPNFIFVSNIESKEPRHVIEGNEKVVRPRLADAEFFFNTDRKRPLIDRLPELEQAIFQKQLGTIKDKTDRITELAGYIAEQIGADVEKSQRAGLLAKCDLMTSMVFEFTDTQGVMGMHYATHDGEDEQVALALYEQYMPRFAGDDLPSTDISASVAMADKLDTLVGIFGIGQAPKGSDPFALRRAALGVLRIIVEKEYNLDLVDLVAKAQSLFGDKLSNANVATDVIDFMLGRFRAWYQDEGFSVDIIQAVLARRPTKPADFDKRVKAVSHFRELDAAESLAAANKRVGNILAKFDGELAQEIDLALLQEDAEKALAEKVEILAEALEPVFAAGNYQEALSRLAELREPVDAFFDNVMVMADDEALKTNRLTLLNKLRNLFLDIADISLLQK.

This sequence belongs to the class-II aminoacyl-tRNA synthetase family. Tetramer of two alpha and two beta subunits.

The protein localises to the cytoplasm. It catalyses the reaction tRNA(Gly) + glycine + ATP = glycyl-tRNA(Gly) + AMP + diphosphate. This Aliivibrio fischeri (strain MJ11) (Vibrio fischeri) protein is Glycine--tRNA ligase beta subunit.